The chain runs to 615 residues: DNA mismatch repair protein MutL (615 aa).

The segment at 362 to 397 (HFAEPAVREPVAPRYSPAPASGGRPAASWPNAQPGY) is disordered. The span at 378–391 (PAPASGGRPAASWP) shows a compositional bias: low complexity.

It belongs to the DNA mismatch repair MutL/HexB family.

Its function is as follows. This protein is involved in the repair of mismatches in DNA. It is required for dam-dependent methyl-directed DNA mismatch repair. May act as a 'molecular matchmaker', a protein that promotes the formation of a stable complex between two or more DNA-binding proteins in an ATP-dependent manner without itself being part of a final effector complex. This Escherichia fergusonii (strain ATCC 35469 / DSM 13698 / CCUG 18766 / IAM 14443 / JCM 21226 / LMG 7866 / NBRC 102419 / NCTC 12128 / CDC 0568-73) protein is DNA mismatch repair protein MutL.